We begin with the raw amino-acid sequence, 239 residues long: Ribonuclease 3 (239 aa).

The RNase III domain occupies 12 to 137 (RARLETAIGY…LIAAIYLDGG (126 aa)). E50 is a Mg(2+) binding site. The active site involves D54. 2 residues coordinate Mg(2+): D123 and E126. E126 is an active-site residue. Residues 162-231 (DAKTELQEWA…AMRLLEREGV (70 aa)) enclose the DRBM domain.

It belongs to the ribonuclease III family. Homodimer. Mg(2+) is required as a cofactor.

It localises to the cytoplasm. It carries out the reaction Endonucleolytic cleavage to 5'-phosphomonoester.. Its function is as follows. Digests double-stranded RNA. Involved in the processing of primary rRNA transcript to yield the immediate precursors to the large and small rRNAs (23S and 16S). Processes some mRNAs, and tRNAs when they are encoded in the rRNA operon. Processes pre-crRNA and tracrRNA of type II CRISPR loci if present in the organism. This Sinorhizobium fredii (strain NBRC 101917 / NGR234) protein is Ribonuclease 3.